A 749-amino-acid chain; its full sequence is Signal transducer and activator of transcription 4 (749 aa).

One can recognise an SH2 domain in the interval tryptophan 570 to aspartate 665. Residue lysine 668 is modified to N6-acetyllysine. The residue at position 694 (tyrosine 694) is a Phosphotyrosine; by JAK. Serine 722 carries the phosphoserine modification.

It belongs to the transcription factor STAT family. Forms a homodimer or a heterodimer with a related family member. Interacts with ARL2BP. Interacts with STAT1. Interacts with JUN; this complex efficiently interacts with the AP-1-related sequence of the IFN-gamma promoter. Post-translationally, acetylation at Lys-668 is required for JAK2-mediated phosphorylation and activation of STAT4. Tyrosine phosphorylated upon IL12 and IFN-alpha activation, but not by IFN-gamma in T-lymphocytes and NK cells. Serine phosphorylation is required for maximal transcriptional activity but not for DNA binding. Phosphorylation by MAP2K6 at Ser-722 is required for full transcriptional activity induced by IL12. However this serine phosphorylation is not required for cell proliferation although critical for IFN-gamma production. In terms of tissue distribution, expression is restricted to testis, thymus, and spleen.

It is found in the cytoplasm. The protein localises to the nucleus. Functionally, transcriptional regulator mainly expressed in hematopoietic cells that plays a critical role in cellular growth, differentiation and immune response. Plays a key role in the differentiation of T-helper 1 cells and the production of interferon-gamma. Also participates in multiple neutrophil functions including chemotaxis and production of the neutrophil extracellular traps. After IL12 binding to its receptor IL12RB2, STAT4 interacts with the intracellular domain of IL12RB2 and becomes tyrosine phosphorylated. Phosphorylated STAT4 then homodimerizes and migrates to the nucleus where it can recognize STAT target sequences present in IL12 responsive genes. Although IL12 appears to be the predominant activating signal, STAT4 can also be phosphorylated and activated in response to IFN-gamma stimulation via JAK1 and TYK2 and in response to different interleukins including IL23, IL2 and IL35. Transcription activation of IFN-gamma gene is mediated by interaction with JUN that forms a complex that efficiently interacts with the AP-1-related sequence of the IFN-gamma promoter. In response to IFN-alpha/beta signaling, acts as a transcriptional repressor and suppresses IL5 and IL13 mRNA expression during response to T-cell receptor (TCR) activation. The protein is Signal transducer and activator of transcription 4 (Stat4) of Mus musculus (Mouse).